The chain runs to 265 residues: Tryptophan synthase alpha chain (265 aa).

Residues E41 and D52 each act as proton acceptor in the active site.

This sequence belongs to the TrpA family. Tetramer of two alpha and two beta chains.

It carries out the reaction (1S,2R)-1-C-(indol-3-yl)glycerol 3-phosphate + L-serine = D-glyceraldehyde 3-phosphate + L-tryptophan + H2O. It functions in the pathway amino-acid biosynthesis; L-tryptophan biosynthesis; L-tryptophan from chorismate: step 5/5. In terms of biological role, the alpha subunit is responsible for the aldol cleavage of indoleglycerol phosphate to indole and glyceraldehyde 3-phosphate. In Bacillus velezensis (strain DSM 23117 / BGSC 10A6 / LMG 26770 / FZB42) (Bacillus amyloliquefaciens subsp. plantarum), this protein is Tryptophan synthase alpha chain.